The following is a 1007-amino-acid chain: MTREQLSLTVLARAGFVGLSSVRAELEELATLTGFPVDDLLPALLAAADPDTALRLALRLLRRAPDQAAWFLRSWKDARRLLRVIGASEGAAEFFLRQPVELASLHRPVTALPTAAELREDLLDAVGAVGGFASVAEEEAWTALRVRYRRRLVQLASFDLEQDDPVAGFDGVAAALSDLAGAALDASLAVARRQASGSGPGRFPEAEVRATRFAIIGMGKAGARELNYVSDVDVIYVTDGAEDAGVPPGRAVDIATRLAVLTQRGIQDPALEPGLWEVDSNLRPEGRDGALVRTLDSHLAYYDRWAKGWEFQALLKARSLAGDWELGERYVTALAPRVWSSASRENFVESVQRMRERVTDNIPDGDLHYQLKLGPGGLRDVEFTVQLLQLVHGQTDGLVRQRDTLSALAALAGQSYIGREEAAAFSHDYRTLRLLEHRLQLRHLRRTHLMPRDEVEVRILARATGLAASAGQLLTQWNEIKHRVRGLHERLFYRPLLSAVAAMPNEDARLSGEAGLTSEQAQARLAAIGFRDPRGALAHIAALTAGVSRRATIQRHLLPVMLQWFSAGADPDYGLLSFRRLSDDLGGTHWYLRMLRDSSGAAERLTRVLSGSRFVAELLGRIPESVAWLESEEELRPRAPELLREETAAILARHESAETAAAALRAVRRREVLRLAFSGILGFSTIEELARGLSAVTENLLTGVLGAIRAARDDAAALEFAIIGMGRFGGRELGFGSDADIMYVFRPLAAGQDAAHRAATAIVADLNRLTEDSALPVDLDIGLRPEGKNGPSVRSLDSYRAYYARWSLAWEAQALLRARGVAGDSALIGDFETLADEVRYPASIGEQAVREVKRIKARIENERLPQGADPARHLKLGRGSLSDVEWFVQLVQLQHAAAHPALRTPSTLDALAVAAGEGFVSGEDAARLRAAWVFASRARSAMTLWTNKTADVLPFDRVVLDGVARLLEYPPGAASRMEEDYLAVTRRARAVFEREFYGPPQRPATTA.

An adenylyl removase region spans residues 1 to 496 (MTREQLSLTV…LHERLFYRPL (496 aa)). The segment at 505–1007 (NEDARLSGEA…GPPQRPATTA (503 aa)) is adenylyl transferase.

It belongs to the GlnE family. Requires Mg(2+) as cofactor.

It catalyses the reaction [glutamine synthetase]-O(4)-(5'-adenylyl)-L-tyrosine + phosphate = [glutamine synthetase]-L-tyrosine + ADP. The catalysed reaction is [glutamine synthetase]-L-tyrosine + ATP = [glutamine synthetase]-O(4)-(5'-adenylyl)-L-tyrosine + diphosphate. Its function is as follows. Involved in the regulation of glutamine synthetase GlnA, a key enzyme in the process to assimilate ammonia. When cellular nitrogen levels are high, the C-terminal adenylyl transferase (AT) inactivates GlnA by covalent transfer of an adenylyl group from ATP to specific tyrosine residue of GlnA, thus reducing its activity. Conversely, when nitrogen levels are low, the N-terminal adenylyl removase (AR) activates GlnA by removing the adenylyl group by phosphorolysis, increasing its activity. The regulatory region of GlnE binds the signal transduction protein PII (GlnB) which indicates the nitrogen status of the cell. This is Bifunctional glutamine synthetase adenylyltransferase/adenylyl-removing enzyme from Leifsonia xyli subsp. xyli (strain CTCB07).